A 160-amino-acid chain; its full sequence is Cyclic pyranopterin monophosphate synthase (160 aa).

Substrate is bound by residues 75–77 and 113–114; these read LCH and ME. Residue Asp-128 is part of the active site.

It belongs to the MoaC family. In terms of assembly, homohexamer; trimer of dimers.

The enzyme catalyses (8S)-3',8-cyclo-7,8-dihydroguanosine 5'-triphosphate = cyclic pyranopterin phosphate + diphosphate. It participates in cofactor biosynthesis; molybdopterin biosynthesis. Its function is as follows. Catalyzes the conversion of (8S)-3',8-cyclo-7,8-dihydroguanosine 5'-triphosphate to cyclic pyranopterin monophosphate (cPMP). This chain is Cyclic pyranopterin monophosphate synthase, found in Beijerinckia indica subsp. indica (strain ATCC 9039 / DSM 1715 / NCIMB 8712).